Reading from the N-terminus, the 338-residue chain is 2-oxoglutarate-dependent dioxygenase ecdG (338 aa).

In terms of domain architecture, Fe2OG dioxygenase spans 165–273 (PSVTNLGFLR…KYTLAYFVRP (109 aa)). 3 residues coordinate Fe cation: H190, D192, and H249. Position 264 (K264) interacts with 2-oxoglutarate.

It belongs to the iron/ascorbate-dependent oxidoreductase family. The cofactor is Fe(2+).

The protein operates within antifungal biosynthesis. Its function is as follows. 2-oxoglutarate-dependent dioxygenase; part of the gene cluster that mediates the biosynthesis of echinocandin B, a fungal lipidated cyclic hexapeptide that acts as an antifungal agent. Linoleoyl-AMP, produced by the fatty-acyl-AMP ligase ecdI, is transferred to the initiation carrier domain (T0) of ecdA. The linoleoyl-S-phosphopantetheinyl-T0 is sequentially extended with L-ornithine, L-threonine, L-proline, L-homotyrosine, L-threonine, and 4R-methyl-L-proline to form the linear hexapeptide. Thereafter, the terminal condensation (C7) performs macrocyclization of the NRPS product and the cyclic scaffold is released from ecdA. All six of the amino acid residues are hydroxylated, including 4R,5R-dihydroxy-L-ornithine, 4R-hydroxyl-L-proline, 3S,4S-dihydroxy-L-homotyrosine, and 3S-hydroxyl-4S-methyl-L-prolin. In the pathway, all the hydroxylation reactions are proposed to occur following completion of the cyclic peptide, so the unhydroxylated precursor produced by ecdA will undergo six rounds of hydroxylation. Five hydroxylase genes (ecdG, ecdH, ecdK, htyE and htyF) are embedded within the echinocandin B (ecd) and L-homotyrosine (hty) clusters. This Aspergillus rugulosus (Emericella rugulosa) protein is 2-oxoglutarate-dependent dioxygenase ecdG.